We begin with the raw amino-acid sequence, 203 residues long: Large ribosomal subunit protein bL25 (203 aa).

The segment at 182-203 (EITEEPETEEKKEEGASSVSNS) is disordered.

The protein belongs to the bacterial ribosomal protein bL25 family. CTC subfamily. In terms of assembly, part of the 50S ribosomal subunit; part of the 5S rRNA/L5/L18/L25 subcomplex. Contacts the 5S rRNA. Binds to the 5S rRNA independently of L5 and L18.

Its function is as follows. This is one of the proteins that binds to the 5S RNA in the ribosome where it forms part of the central protuberance. This is Large ribosomal subunit protein bL25 from Caldicellulosiruptor saccharolyticus (strain ATCC 43494 / DSM 8903 / Tp8T 6331).